The sequence spans 421 residues: UDP-N-acetylglucosamine 1-carboxyvinyltransferase (421 aa).

Position 22–23 (22–23) interacts with phosphoenolpyruvate; it reads KN. Arginine 93 contacts UDP-N-acetyl-alpha-D-glucosamine. Catalysis depends on cysteine 117, which acts as the Proton donor. Cysteine 117 is subject to 2-(S-cysteinyl)pyruvic acid O-phosphothioketal. Residues 122-126, aspartate 308, and isoleucine 330 contribute to the UDP-N-acetyl-alpha-D-glucosamine site; that span reads RPVDL.

This sequence belongs to the EPSP synthase family. MurA subfamily.

The protein localises to the cytoplasm. It carries out the reaction phosphoenolpyruvate + UDP-N-acetyl-alpha-D-glucosamine = UDP-N-acetyl-3-O-(1-carboxyvinyl)-alpha-D-glucosamine + phosphate. It functions in the pathway cell wall biogenesis; peptidoglycan biosynthesis. Cell wall formation. Adds enolpyruvyl to UDP-N-acetylglucosamine. The polypeptide is UDP-N-acetylglucosamine 1-carboxyvinyltransferase (Pseudomonas putida (strain ATCC 700007 / DSM 6899 / JCM 31910 / BCRC 17059 / LMG 24140 / F1)).